The following is a 172-amino-acid chain: Ribosome maturation factor RimM (172 aa).

In terms of domain architecture, PRC barrel spans 96-169 (PDEFYDHQLE…AIEIDPPEGL (74 aa)).

The protein belongs to the RimM family. As to quaternary structure, binds ribosomal protein uS19.

Its subcellular location is the cytoplasm. In terms of biological role, an accessory protein needed during the final step in the assembly of 30S ribosomal subunit, possibly for assembly of the head region. Essential for efficient processing of 16S rRNA. May be needed both before and after RbfA during the maturation of 16S rRNA. It has affinity for free ribosomal 30S subunits but not for 70S ribosomes. This is Ribosome maturation factor RimM from Mycolicibacterium vanbaalenii (strain DSM 7251 / JCM 13017 / BCRC 16820 / KCTC 9966 / NRRL B-24157 / PYR-1) (Mycobacterium vanbaalenii).